The primary structure comprises 350 residues: Twinfilin-1 (350 aa).

S2 is modified (N-acetylserine). An ADF-H 1 domain is found at S2–L139. Phosphoserine occurs at positions 143 and 277. The 139-residue stretch at L175–H313 folds into the ADF-H 2 domain. Y309 carries the phosphotyrosine modification. The segment at Q316 to D350 is disordered. T349 carries the phosphothreonine modification.

It belongs to the actin-binding proteins ADF family. Twinfilin subfamily. In terms of assembly, interacts with G-actin; ADP-actin form and capping protein (CP). May also be able to interact with TWF2 and phosphoinositides, PI(4,5)P2. When bound to PI(4,5)P2, it is down-regulated. Interacts with ACTG1. In terms of processing, phosphorylated on serine and threonine residues.

It is found in the cytoplasm. The protein resides in the cytoskeleton. Its function is as follows. Actin-binding protein involved in motile and morphological processes. Inhibits actin polymerization, likely by sequestering G-actin. By capping the barbed ends of filaments, it also regulates motility. Seems to play an important role in clathrin-mediated endocytosis and distribution of endocytic organelles. The chain is Twinfilin-1 (Twf1) from Rattus norvegicus (Rat).